The chain runs to 784 residues: LPS-assembly protein LptD (784 aa).

The first 24 residues, 1–24 (MKKRIPTLLATMIATALYSQQGLA), serve as a signal peptide directing secretion. 2 cysteine pairs are disulfide-bonded: cysteine 31–cysteine 724 and cysteine 173–cysteine 725.

This sequence belongs to the LptD family. In terms of assembly, component of the lipopolysaccharide transport and assembly complex. Interacts with LptE and LptA. Contains two intramolecular disulfide bonds.

Its subcellular location is the cell outer membrane. Its function is as follows. Together with LptE, is involved in the assembly of lipopolysaccharide (LPS) at the surface of the outer membrane. The sequence is that of LPS-assembly protein LptD from Shigella flexneri serotype 5b (strain 8401).